A 695-amino-acid polypeptide reads, in one-letter code: tRNA wybutosine-synthesizing protein 4 (695 aa).

Residues Lys-38, Arg-88, Gly-115, Asp-146–Tyr-147, Asp-196–Leu-197, and Glu-224 contribute to the S-adenosyl-L-methionine site. Arg-88 functions as the Proton donor; for both methylation and methoxycarbonylation activities in the catalytic mechanism. Tyr-229 functions as the Proton acceptor; for methoxycarbonylation activity in the catalytic mechanism.

This sequence belongs to the methyltransferase superfamily. LCMT family.

Its subcellular location is the cytoplasm. The protein localises to the mitochondrion. The catalysed reaction is 7-[(3S)-3-amino-3-carboxypropyl]wyosine(37) in tRNA(Phe) + S-adenosyl-L-methionine = 7-[(3S)-(3-amino-3-methoxycarbonyl)propyl]wyosine(37) in tRNA(Phe) + S-adenosyl-L-homocysteine. The enzyme catalyses 7-[(3S)-(3-amino-3-methoxycarbonyl)propyl]wyosine(37) in tRNA(Phe) + S-adenosyl-L-methionine + CO2 = wybutosine(37) in tRNA(Phe) + S-adenosyl-L-homocysteine + 2 H(+). The protein operates within tRNA modification; wybutosine-tRNA(Phe) biosynthesis. In terms of biological role, S-adenosyl-L-methionine-dependent methyltransferase that acts as a component of the wybutosine biosynthesis pathway. Wybutosine is a hyper modified guanosine with a tricyclic base found at the 3'-position adjacent to the anticodon of eukaryotic phenylalanine tRNA. Catalyzes the final 2 independent reactions, methylation of the alpha-carboxy group of wybutosine-72 to form wybutosine-58, and methoxycarbonylation of alpha-amino group of wybutosine-58 through the fixation of CO(2) to complete wybutosine. In Saccharomyces cerevisiae (strain ATCC 204508 / S288c) (Baker's yeast), this protein is tRNA wybutosine-synthesizing protein 4 (PPM2).